A 202-amino-acid polypeptide reads, in one-letter code: Heat shock 22 kDa protein, mitochondrial (202 aa).

The N-terminal 31 residues, 1-31 (MASSLALKRFLSSGLLSSSFLRPVASSASRS), are a transit peptide targeting the mitochondrion. Residues 94–202 (VLSAASRRGW…RNNVINVKVD (109 aa)) form the sHSP domain.

This sequence belongs to the small heat shock protein (HSP20) family.

The protein localises to the mitochondrion. This Pisum sativum (Garden pea) protein is Heat shock 22 kDa protein, mitochondrial (HSP22).